The following is a 318-amino-acid chain: Pantothenate kinase (318 aa).

96 to 103 (GSVAVGKS) lines the ATP pocket.

This sequence belongs to the prokaryotic pantothenate kinase family.

Its subcellular location is the cytoplasm. The enzyme catalyses (R)-pantothenate + ATP = (R)-4'-phosphopantothenate + ADP + H(+). It participates in cofactor biosynthesis; coenzyme A biosynthesis; CoA from (R)-pantothenate: step 1/5. The protein is Pantothenate kinase of Rhodopseudomonas palustris (strain ATCC BAA-98 / CGA009).